A 462-amino-acid polypeptide reads, in one-letter code: Lipase A (462 aa).

The N-terminal stretch at 1 to 21 (MRVSLRSITSLLAAATAAVLA) is a signal peptide. The cysteines at positions 122 and 294 are disulfide-linked. Catalysis depends on charge relay system residues Ser-205, Asp-355, and His-387. Cys-371 and Cys-415 are disulfide-bonded.

The protein belongs to the AB hydrolase superfamily. Lipase family. Monomer.

It is found in the secreted. It carries out the reaction a triacylglycerol + H2O = a diacylglycerol + a fatty acid + H(+). In terms of biological role, hydrolyzes triglycerides, with a preference for substrates with short-chain lengths (C4 to C8). Has the highest activity with tributyrin (C4), followed by tricaproin (C6) and tricaprylin (C8). Can also hydrolyze vinylacetate (C2) and triolein (C18), but with lower efficiency. Has no activity with tripalmitin (C16). The polypeptide is Lipase A (Moesziomyces aphidis (Pseudozyma aphidis)).